Here is a 59-residue protein sequence, read N- to C-terminus: Large ribosomal subunit protein bL32 (59 aa).

The disordered stretch occupies residues 1 to 40 (MAVQQNKKSPSKRGMHRSHDFLRTTPLSVDPGTGEVHLRH).

This sequence belongs to the bacterial ribosomal protein bL32 family.

This chain is Large ribosomal subunit protein bL32, found in Nitrosospira multiformis (strain ATCC 25196 / NCIMB 11849 / C 71).